Reading from the N-terminus, the 243-residue chain is 1-(5-phosphoribosyl)-5-[(5-phosphoribosylamino)methylideneamino] imidazole-4-carboxamide isomerase (243 aa).

D8 acts as the Proton acceptor in catalysis. The Proton donor role is filled by D130.

It belongs to the HisA/HisF family.

It localises to the cytoplasm. The enzyme catalyses 1-(5-phospho-beta-D-ribosyl)-5-[(5-phospho-beta-D-ribosylamino)methylideneamino]imidazole-4-carboxamide = 5-[(5-phospho-1-deoxy-D-ribulos-1-ylimino)methylamino]-1-(5-phospho-beta-D-ribosyl)imidazole-4-carboxamide. Its pathway is amino-acid biosynthesis; L-histidine biosynthesis; L-histidine from 5-phospho-alpha-D-ribose 1-diphosphate: step 4/9. This is 1-(5-phosphoribosyl)-5-[(5-phosphoribosylamino)methylideneamino] imidazole-4-carboxamide isomerase from Cellvibrio japonicus (strain Ueda107) (Pseudomonas fluorescens subsp. cellulosa).